Here is a 287-residue protein sequence, read N- to C-terminus: Phosphatidylinositol transfer protein 5 (287 aa).

Positions 252-287 (FHNNNNNNSNNSNNNNNNNTQPQRSSFFSRSTDGNK) are disordered. The span at 254–270 (NNNNNNSNNSNNNNNNN) shows a compositional bias: low complexity. Polar residues predominate over residues 271 to 287 (TQPQRSSFFSRSTDGNK).

The protein belongs to the PtdIns transfer protein family. PI transfer class IIA subfamily.

Functionally, phosphatidylinositol transfer proteins mediate the monomeric transport of lipids by shielding a lipid from the aqueous environment and binding the lipid in a hydrophobic cavity. The protein is Phosphatidylinositol transfer protein 5 (pitE) of Dictyostelium discoideum (Social amoeba).